The sequence spans 136 residues: Small ribosomal subunit protein uS9 (136 aa).

The interval 97–136 (SPDNRKPLKTEGHLSRDPRAKERRKYGLKKARKAPQFSKR) is disordered. Basic and acidic residues predominate over residues 98-116 (PDNRKPLKTEGHLSRDPRA). The span at 117–136 (KERRKYGLKKARKAPQFSKR) shows a compositional bias: basic residues.

Belongs to the universal ribosomal protein uS9 family.

This chain is Small ribosomal subunit protein uS9, found in Prochlorococcus marinus (strain AS9601).